Consider the following 653-residue polypeptide: Bifunctional lysine-specific demethylase and histidyl-hydroxylase NO66 (653 aa).

Low complexity predominate over residues 1-12; it reads MKKATTSAAAKS. Disordered regions lie at residues 1–50 and 65–137; these read MKKA…DMLA and FDDD…LERT. The span at 13–26 shows a compositional bias: polar residues; it reads QGNSKMQKNANNGT. Residue Ser44 is modified to Phosphoserine. A compositionally biased stretch (low complexity) spans 72 to 86; it reads STSKKTQSGSAAAAK. Phosphoserine is present on Ser131. Thr137 is subject to Phosphothreonine. At Ser138 the chain carries Phosphoserine. Residues 184–208 are disordered; the sequence is AEPTEEGNNNNDEKETETIETHKAD. Basic and acidic residues predominate over residues 194–208; the sequence is NDEKETETIETHKAD. The region spanning 300 to 450 is the JmjC domain; the sequence is FYSDGCSIRL…NLLETLMPMV (151 aa). The Fe cation site is built by His351, Asp353, and His416.

This sequence belongs to the ROX family. NO66 subfamily. Fe(2+) serves as cofactor.

The protein resides in the nucleus. It catalyses the reaction N(6),N(6)-dimethyl-L-lysyl(36)-[histone H3] + 2 2-oxoglutarate + 2 O2 = L-lysyl(36)-[histone H3] + 2 formaldehyde + 2 succinate + 2 CO2. Oxygenase that can act as both a histone lysine demethylase and a ribosomal histidine hydroxylase. Specifically demethylates 'Lys-4' (H3K4me) and 'Lys-36' (H3K36me) of histone H3, thereby playing a central role in histone code. This chain is Bifunctional lysine-specific demethylase and histidyl-hydroxylase NO66, found in Drosophila melanogaster (Fruit fly).